Consider the following 578-residue polypeptide: Proline--tRNA ligase (578 aa).

This sequence belongs to the class-II aminoacyl-tRNA synthetase family. ProS type 1 subfamily. In terms of assembly, homodimer.

The protein localises to the cytoplasm. The enzyme catalyses tRNA(Pro) + L-proline + ATP = L-prolyl-tRNA(Pro) + AMP + diphosphate. Catalyzes the attachment of proline to tRNA(Pro) in a two-step reaction: proline is first activated by ATP to form Pro-AMP and then transferred to the acceptor end of tRNA(Pro). As ProRS can inadvertently accommodate and process non-cognate amino acids such as alanine and cysteine, to avoid such errors it has two additional distinct editing activities against alanine. One activity is designated as 'pretransfer' editing and involves the tRNA(Pro)-independent hydrolysis of activated Ala-AMP. The other activity is designated 'posttransfer' editing and involves deacylation of mischarged Ala-tRNA(Pro). The misacylated Cys-tRNA(Pro) is not edited by ProRS. In Burkholderia mallei (strain ATCC 23344), this protein is Proline--tRNA ligase.